We begin with the raw amino-acid sequence, 238 residues long: Ribonuclease PH (238 aa).

Phosphate contacts are provided by residues R86 and 124–126 (GTR).

This sequence belongs to the RNase PH family. As to quaternary structure, homohexameric ring arranged as a trimer of dimers.

The enzyme catalyses tRNA(n+1) + phosphate = tRNA(n) + a ribonucleoside 5'-diphosphate. Phosphorolytic 3'-5' exoribonuclease that plays an important role in tRNA 3'-end maturation. Removes nucleotide residues following the 3'-CCA terminus of tRNAs; can also add nucleotides to the ends of RNA molecules by using nucleoside diphosphates as substrates, but this may not be physiologically important. Probably plays a role in initiation of 16S rRNA degradation (leading to ribosome degradation) during starvation. This Erwinia tasmaniensis (strain DSM 17950 / CFBP 7177 / CIP 109463 / NCPPB 4357 / Et1/99) protein is Ribonuclease PH.